We begin with the raw amino-acid sequence, 374 residues long: Pectate lyase 2 (374 aa).

A signal peptide spans 1 to 22 (MKYLLPTAATGLLLLAAQPAVA). A disulfide bridge connects residues C93 and C176. Positions 150, 152, 187, and 191 each coordinate Ca(2+). The active site involves R239. C350 and C373 are oxidised to a cystine.

Belongs to the polysaccharide lyase 1 family. PLADES subfamily. Ca(2+) is required as a cofactor.

The protein resides in the secreted. The catalysed reaction is Eliminative cleavage of (1-&gt;4)-alpha-D-galacturonan to give oligosaccharides with 4-deoxy-alpha-D-galact-4-enuronosyl groups at their non-reducing ends.. It participates in glycan metabolism; pectin degradation; 2-dehydro-3-deoxy-D-gluconate from pectin: step 2/5. In terms of biological role, involved in maceration and soft-rotting of plant tissue. The protein is Pectate lyase 2 (pel2) of Pectobacterium atrosepticum (strain SCRI 1043 / ATCC BAA-672) (Erwinia carotovora subsp. atroseptica).